The chain runs to 386 residues: NADPH-dependent alkenal/one oxidoreductase, chloroplastic (386 aa).

This sequence belongs to the zinc-containing alcohol dehydrogenase family. Quinone oxidoreductase subfamily.

It is found in the plastid. Its subcellular location is the chloroplast. Reduces the double bond in short-chain unsaturated carbonyls. Acts preferentially on alpha,beta-unsaturated ketones rather on alpha,beta-unsaturated aldehydes. Has no activity with (E)-2-hexenal and (E)-2-pentenal. Contributes to detoxify stromal reactive carbonyls produced under oxidative stress. This is NADPH-dependent alkenal/one oxidoreductase, chloroplastic from Arabidopsis thaliana (Mouse-ear cress).